The chain runs to 140 residues: Transcription antitermination protein NusB (140 aa).

The protein belongs to the NusB family.

In terms of biological role, involved in transcription antitermination. Required for transcription of ribosomal RNA (rRNA) genes. Binds specifically to the boxA antiterminator sequence of the ribosomal RNA (rrn) operons. The sequence is that of Transcription antitermination protein NusB from Streptococcus pneumoniae serotype 2 (strain D39 / NCTC 7466).